The sequence spans 358 residues: Protein RecA (358 aa).

67–74 (GPESSGKT) contacts ATP.

The protein belongs to the RecA family.

Its subcellular location is the cytoplasm. In terms of biological role, can catalyze the hydrolysis of ATP in the presence of single-stranded DNA, the ATP-dependent uptake of single-stranded DNA by duplex DNA, and the ATP-dependent hybridization of homologous single-stranded DNAs. It interacts with LexA causing its activation and leading to its autocatalytic cleavage. In Xenorhabdus bovienii (Xenorhabdus nematophila subsp. bovienii), this protein is Protein RecA.